The chain runs to 43 residues: Protein PsbN (43 aa).

Residues 7–27 traverse the membrane as a helical segment; that stretch reads FVVGILVALVLITAFAVYTAF.

It belongs to the PsbN family.

The protein localises to the cell inner membrane. May play a role in photosystem I and II biogenesis. The chain is Protein PsbN from Gloeobacter violaceus (strain ATCC 29082 / PCC 7421).